Here is a 157-residue protein sequence, read N- to C-terminus: 2-C-methyl-D-erythritol 2,4-cyclodiphosphate synthase (157 aa).

Residues Asp-8 and His-10 each coordinate a divalent metal cation. Residues 8–10 and 34–35 contribute to the 4-CDP-2-C-methyl-D-erythritol 2-phosphate site; these read DVH and HS. His-42 serves as a coordination point for a divalent metal cation. 4-CDP-2-C-methyl-D-erythritol 2-phosphate contacts are provided by residues 56-58, 61-65, 100-106, 132-135, and Phe-139; these read DIG, FPDTD, AQKPKMA, and TTEE.

The protein belongs to the IspF family. In terms of assembly, homotrimer. Requires a divalent metal cation as cofactor.

It carries out the reaction 4-CDP-2-C-methyl-D-erythritol 2-phosphate = 2-C-methyl-D-erythritol 2,4-cyclic diphosphate + CMP. It functions in the pathway isoprenoid biosynthesis; isopentenyl diphosphate biosynthesis via DXP pathway; isopentenyl diphosphate from 1-deoxy-D-xylulose 5-phosphate: step 4/6. Its function is as follows. Involved in the biosynthesis of isopentenyl diphosphate (IPP) and dimethylallyl diphosphate (DMAPP), two major building blocks of isoprenoid compounds. Catalyzes the conversion of 4-diphosphocytidyl-2-C-methyl-D-erythritol 2-phosphate (CDP-ME2P) to 2-C-methyl-D-erythritol 2,4-cyclodiphosphate (ME-CPP) with a corresponding release of cytidine 5-monophosphate (CMP). The polypeptide is 2-C-methyl-D-erythritol 2,4-cyclodiphosphate synthase (Clostridium novyi (strain NT)).